A 609-amino-acid chain; its full sequence is UvrABC system protein C (609 aa).

The GIY-YIG domain maps to 16–94 (SSPGVYRMYD…IKQYMPKYNV (79 aa)). Residues 203–238 (QQVMSVLVQKMEQASSDMRYEQAALYRDQITALRRV) form the UVR domain.

It belongs to the UvrC family. In terms of assembly, interacts with UvrB in an incision complex.

It localises to the cytoplasm. In terms of biological role, the UvrABC repair system catalyzes the recognition and processing of DNA lesions. UvrC both incises the 5' and 3' sides of the lesion. The N-terminal half is responsible for the 3' incision and the C-terminal half is responsible for the 5' incision. This chain is UvrABC system protein C, found in Shewanella pealeana (strain ATCC 700345 / ANG-SQ1).